Here is a 257-residue protein sequence, read N- to C-terminus: UPF0246 protein ACICU_02469 (257 aa).

The protein belongs to the UPF0246 family.

The protein is UPF0246 protein ACICU_02469 of Acinetobacter baumannii (strain ACICU).